The following is a 116-amino-acid chain: Ribonuclease P protein component (116 aa).

Belongs to the RnpA family. In terms of assembly, consists of a catalytic RNA component (M1 or rnpB) and a protein subunit.

The enzyme catalyses Endonucleolytic cleavage of RNA, removing 5'-extranucleotides from tRNA precursor.. Its function is as follows. RNaseP catalyzes the removal of the 5'-leader sequence from pre-tRNA to produce the mature 5'-terminus. It can also cleave other RNA substrates such as 4.5S RNA. The protein component plays an auxiliary but essential role in vivo by binding to the 5'-leader sequence and broadening the substrate specificity of the ribozyme. This Acholeplasma laidlawii (strain PG-8A) protein is Ribonuclease P protein component.